A 720-amino-acid chain; its full sequence is Engulfment and cell motility protein 3 (720 aa).

An ELMO domain is found at 307 to 479; that stretch reads EQREQLQALR…VVREQLARTL (173 aa). Positions 541–663 constitute a PH domain; it reads LRLCEGMLFR…WTDGLSALLG (123 aa).

In terms of assembly, probably interacts directly with the SH3-domain of DOCK1 via its SH3-binding site. Part of a complex with DOCK1 and RAC1. Interacts with ADGRB3.

It localises to the cytoplasm. Functionally, involved in cytoskeletal rearrangements required for phagocytosis of apoptotic cells and cell motility. Acts in association with DOCK1 and CRK. Was initially proposed to be required in complex with DOCK1 to activate Rac Rho small GTPases. May enhance the guanine nucleotide exchange factor (GEF) activity of DOCK1. This Rattus norvegicus (Rat) protein is Engulfment and cell motility protein 3 (Elmo3).